We begin with the raw amino-acid sequence, 347 residues long: GMP reductase (347 aa).

NADP(+) is bound at residue 108–131 (AEFEKVKKIMALSEEFVFICIDIA). The K(+) site is built by Gly181 and Gly183. Catalysis depends on Cys186, which acts as the Thioimidate intermediate. 216–239 (IIGDGGCSCAGDVSKAFGGGADFV) is a binding site for NADP(+).

The protein belongs to the IMPDH/GMPR family. GuaC type 1 subfamily. As to quaternary structure, homotetramer.

It carries out the reaction IMP + NH4(+) + NADP(+) = GMP + NADPH + 2 H(+). Functionally, catalyzes the irreversible NADPH-dependent deamination of GMP to IMP. It functions in the conversion of nucleobase, nucleoside and nucleotide derivatives of G to A nucleotides, and in maintaining the intracellular balance of A and G nucleotides. This Vibrio atlanticus (strain LGP32) (Vibrio splendidus (strain Mel32)) protein is GMP reductase.